The following is a 293-amino-acid chain: Methylsterol monooxygenase 1 (293 aa).

2 consecutive transmembrane segments (helical) span residues 55-75 (LIVH…FQFI) and 100-120 (KILF…YYFT). Positions 144 to 274 (GCAVIEDTWH…FTWWDKLFGT (131 aa)) constitute a Fatty acid hydroxylase domain. The short motif at 157 to 161 (HRLLH) is the Histidine box-1 element. Residues 170-174 (HKVHH) carry the Histidine box-2 motif. Residues 199 to 219 (FFIGIVLLCDHVILLWAWVTI) traverse the membrane as a helical segment. The short motif at 249–255 (HHDFHHM) is the Histidine box-3 element.

It belongs to the sterol desaturase family. Fe cation serves as cofactor. Post-translationally, ubiquitinated by MARCHF6, leading to proteasomal degradation.

It localises to the endoplasmic reticulum membrane. The enzyme catalyses 4,4-dimethyl-5alpha-cholest-7-en-3beta-ol + 6 Fe(II)-[cytochrome b5] + 3 O2 + 5 H(+) = 4alpha-carboxy-4beta-methyl-5alpha-cholest-7-ene-3beta-ol + 6 Fe(III)-[cytochrome b5] + 4 H2O. It carries out the reaction 4,4-dimethyl-5alpha-cholesta-8,24-dien-3beta-ol + 6 Fe(II)-[cytochrome b5] + 3 O2 + 5 H(+) = 4beta-methylzymosterol-4alpha-carboxylate + 6 Fe(III)-[cytochrome b5] + 4 H2O. The catalysed reaction is 4alpha-methylzymosterol + 6 Fe(II)-[cytochrome b5] + 3 O2 + 5 H(+) = 4alpha-carboxyzymosterol + 6 Fe(III)-[cytochrome b5] + 4 H2O. It catalyses the reaction 4alpha-methyl-5alpha-cholest-7-en-3beta-ol + 6 Fe(II)-[cytochrome b5] + 3 O2 + 5 H(+) = 4alpha-carboxy-5alpha-cholest-7-en-3beta-ol + 6 Fe(III)-[cytochrome b5] + 4 H2O. The enzyme catalyses 4,4-dimethyl-5alpha-cholest-8-en-3beta-ol + 6 Fe(II)-[cytochrome b5] + 3 O2 + 5 H(+) = 4alpha-carboxy-4beta-methyl-5alpha-cholest-8-en-3beta-ol + 6 Fe(III)-[cytochrome b5] + 4 H2O. It carries out the reaction 4alpha-methyl-5alpha-cholest-8-en-3beta-ol + 6 Fe(II)-[cytochrome b5] + 3 O2 + 5 H(+) = 4alpha-carboxy-5alpha-cholest-8-ene-3beta-ol + 6 Fe(III)-[cytochrome b5] + 4 H2O. The protein operates within steroid biosynthesis; zymosterol biosynthesis; zymosterol from lanosterol: step 3/6. Its pathway is steroid biosynthesis; cholesterol biosynthesis. Catalyzes the three-step monooxygenation required for the demethylation of 4,4-dimethyl and 4alpha-methylsterols, which can be subsequently metabolized to cholesterol. The sequence is that of Methylsterol monooxygenase 1 (Msmo1) from Mus musculus (Mouse).